The chain runs to 371 residues: MEKRPEDTRVVVGMSGGVDSSVAALLLKEQGYDVIGIFMKNWDDTDENGFCTATEDYEDVIRVCNQIGIPYYAVNFEKQYYEKVFQYFLDEYKAGRTPNPDVLCNKEIKFKAFLEHALSLGADYLATGHYARVDRSGGKVRMLRGIDENKDQTYFLNQLTEDTLSKVMFPIGELQKSRVREIAKEAELATATKKDSTGICFIGERNFKTFLSQYLPAQPGDMMTMDGEVKGRHDGLMYYTIGQRHGLGIGGSGEPWFAVGKDLEKNILYVDQGFHNPLLYSDKITATNISWVRSDIMKGEEISCTAKFRYRQEDHKVTVRMTGEGEAEVIFDEQVRAVTPGQAVVFYDGEECLGGGTIDDVYKDGTKLWYV.

ATP contacts are provided by residues 13-20 (GMSGGVDS) and Met-39. An interaction with target base in tRNA region spans residues 99–101 (NPD). The Nucleophile role is filled by Cys-104. Cys-104 and Cys-200 are joined by a disulfide. Gly-128 contributes to the ATP binding site. Positions 150-152 (KDQ) are interaction with tRNA. The active-site Cysteine persulfide intermediate is the Cys-200. Residues 309–310 (RY) are interaction with tRNA.

The protein belongs to the MnmA/TRMU family.

It is found in the cytoplasm. The enzyme catalyses S-sulfanyl-L-cysteinyl-[protein] + uridine(34) in tRNA + AH2 + ATP = 2-thiouridine(34) in tRNA + L-cysteinyl-[protein] + A + AMP + diphosphate + H(+). Functionally, catalyzes the 2-thiolation of uridine at the wobble position (U34) of tRNA, leading to the formation of s(2)U34. In Bacillus subtilis (strain 168), this protein is tRNA-specific 2-thiouridylase MnmA.